We begin with the raw amino-acid sequence, 172 residues long: C-phycocyanin beta chain (172 aa).

Asparagine 72 is subject to N4-methylasparagine. The (2R,3E)-phycocyanobilin site is built by cysteine 82 and cysteine 153.

Belongs to the phycobiliprotein family. In terms of assembly, heterodimer of an alpha and a beta subunit, which further assembles into trimers and the trimers into hexamers. The basic functional unit of phycobiliproteins is a ring-shaped hexamer formed from two back-to-back trimers contacting via the alpha chain subunits. The trimers are composed of alpha/beta subunit heterodimers arranged around a three-fold axis of symmetry. The phycoerythrins also contain a gamma subunit which is located in the center of the hexamer. Post-translationally, contains two covalently linked bilin chromophores.

It is found in the plastid. The protein localises to the chloroplast thylakoid membrane. In terms of biological role, light-harvesting photosynthetic bile pigment-protein from the phycobiliprotein complex (phycobilisome, PBS). Phycocyanin is the major phycobiliprotein in the PBS rod. The sequence is that of C-phycocyanin beta chain (cpcB) from Porphyra purpurea (Red seaweed).